The following is a 514-amino-acid chain: Polygalacturonase (514 aa).

The N-terminal stretch at methionine 1–alanine 22 is a signal peptide. The propeptide occupies glutamate 23–leucine 45. PbH1 repeat units follow at residues cysteine 214–alanine 240, serine 241–threonine 262, serine 264–serine 284, valine 294–threonine 315, and alanine 323–glutamine 344. Aspartate 255 acts as the Proton donor in catalysis. Histidine 278 is a catalytic residue. Residues alanine 434 to proline 514 constitute a propeptide that is removed on maturation. N-linked (GlcNAc...) asparagine glycosylation is found at asparagine 460 and asparagine 472.

Belongs to the glycosyl hydrolase 28 family.

It localises to the secreted. The protein resides in the plastid. Its subcellular location is the amyloplast. The protein localises to the cell wall. The enzyme catalyses (1,4-alpha-D-galacturonosyl)n+m + H2O = (1,4-alpha-D-galacturonosyl)n + (1,4-alpha-D-galacturonosyl)m.. This Cryptomeria japonica (Japanese cedar) protein is Polygalacturonase.